Here is a 239-residue protein sequence, read N- to C-terminus: Fatty acid metabolism regulator protein (239 aa).

In terms of domain architecture, HTH gntR-type spans 6–74 (KGPASFAEKY…HGKPTQVNNF (69 aa)). A DNA-binding region (H-T-H motif) is located at residues 34–53 (ERELSELIGVTRTTLREVLQ).

In terms of assembly, homodimer.

It is found in the cytoplasm. Multifunctional regulator of fatty acid metabolism. The polypeptide is Fatty acid metabolism regulator protein (Shewanella denitrificans (strain OS217 / ATCC BAA-1090 / DSM 15013)).